The sequence spans 169 residues: Ribosome maturation factor RimM (169 aa).

Positions 92–167 (PKDTYFICDI…YMKIKVVEGL (76 aa)) constitute a PRC barrel domain.

The protein belongs to the RimM family. Binds ribosomal protein uS19.

The protein resides in the cytoplasm. An accessory protein needed during the final step in the assembly of 30S ribosomal subunit, possibly for assembly of the head region. Essential for efficient processing of 16S rRNA. May be needed both before and after RbfA during the maturation of 16S rRNA. It has affinity for free ribosomal 30S subunits but not for 70S ribosomes. The protein is Ribosome maturation factor RimM of Caldicellulosiruptor bescii (strain ATCC BAA-1888 / DSM 6725 / KCTC 15123 / Z-1320) (Anaerocellum thermophilum).